Here is a 931-residue protein sequence, read N- to C-terminus: Protein translocase subunit SecA (931 aa).

Residues Gln-87, 105–109, and Asp-515 contribute to the ATP site; that span reads GEGKT. Residues Cys-915, Cys-917, Cys-926, and His-927 each contribute to the Zn(2+) site.

It belongs to the SecA family. As to quaternary structure, monomer and homodimer. Part of the essential Sec protein translocation apparatus which comprises SecA, SecYEG and auxiliary proteins SecDF-YajC and YidC. Zn(2+) is required as a cofactor.

Its subcellular location is the cell inner membrane. The protein localises to the cytoplasm. The catalysed reaction is ATP + H2O + cellular proteinSide 1 = ADP + phosphate + cellular proteinSide 2.. Its function is as follows. Part of the Sec protein translocase complex. Interacts with the SecYEG preprotein conducting channel. Has a central role in coupling the hydrolysis of ATP to the transfer of proteins into and across the cell membrane, serving both as a receptor for the preprotein-SecB complex and as an ATP-driven molecular motor driving the stepwise translocation of polypeptide chains across the membrane. This chain is Protein translocase subunit SecA, found in Burkholderia pseudomallei (strain 1106a).